Reading from the N-terminus, the 93-residue chain is Pyrimidine/purine nucleoside phosphorylase (93 aa).

Belongs to the nucleoside phosphorylase PpnP family.

The catalysed reaction is a purine D-ribonucleoside + phosphate = a purine nucleobase + alpha-D-ribose 1-phosphate. It carries out the reaction adenosine + phosphate = alpha-D-ribose 1-phosphate + adenine. The enzyme catalyses cytidine + phosphate = cytosine + alpha-D-ribose 1-phosphate. It catalyses the reaction guanosine + phosphate = alpha-D-ribose 1-phosphate + guanine. The catalysed reaction is inosine + phosphate = alpha-D-ribose 1-phosphate + hypoxanthine. It carries out the reaction thymidine + phosphate = 2-deoxy-alpha-D-ribose 1-phosphate + thymine. The enzyme catalyses uridine + phosphate = alpha-D-ribose 1-phosphate + uracil. It catalyses the reaction xanthosine + phosphate = alpha-D-ribose 1-phosphate + xanthine. In terms of biological role, catalyzes the phosphorolysis of diverse nucleosides, yielding D-ribose 1-phosphate and the respective free bases. Can use uridine, adenosine, guanosine, cytidine, thymidine, inosine and xanthosine as substrates. Also catalyzes the reverse reactions. This is Pyrimidine/purine nucleoside phosphorylase from Pseudomonas syringae pv. syringae (strain B728a).